The primary structure comprises 1193 residues: MAAPYRQPEEAVDDSEFIDDHHDHLRDTVHHRLRANSAIMQFQKILVANRGEIPIRIFRTAHELSLQTVAIFSHEDRLSMHRQKADEAYMIGHRGQYTPVGAYLAADEIVKIALEHGVHLIHPGYGFLSENADFARKVEKAGMVFVGPTPDTIDSLGDKVSARQLAIRCNVPVVPGTEGPVERYEEVKAFTDTYGFPIIIKAAFGGGGRGMRVVRNQADLRDSFERATSEARSAFGNGTVFVERFLDKPKHIEVQLLGDNHGNVVHLFERDCSVQRRHQKVVEVAPAKDLPTDVRDRILSDAVKLAKSVNYRNAGTAEFLVDQQNRHYFIEINPRIQVEHTITEEITGIDIVAAQIQIAAGATLEQLGLTQDRISTRGFAIQCRITTEDPSKGFSPDTGKIEVYRSAGGNGVRLDGGNGFAGAIITPHYDSMLVKCTCRGSTYEIARRKVVRALVEFRIRGVKTNIPFLTSLLSHPTFVDGNCWTTFIDDTTELFALVGSQNRAQKLLAYLGDVAVNGSSIKGQMGEPKFKGEIIKPKLLDAQGKPLDVSHPCTKGWKQIIDQEGPVAFAKAVRANKGCLIMDTTWRDAHQSLLATRVRTIDLLNIAHETSHALSNAYSLECWGGATFDVAMRFLYEDPWDRLRKMRKAVPNIPFQMLLRGANGVAYSSLPDNAIYHFCKNAKKCGVDIFRVFDALNDVDQLEVGIKAVHAAEGVVEATVCYSGDMLNPKKKYNLEYYLALVDKIVALKPHVLGIKDMAGVLKPQAARLLVGSIRERYPDLPIHVHTHDSAGTGVASMIACAQAGADAVDAATDSMSGMTSQPSIGAILASLEGTEHDPGLNSAHVRALDSYWAQLRLLYSPFEANLTGPDPEVYEHEIPGGQLTNLIFQASQLGLGQQWAETKKAYEVANDLLGDIVKVTPTSKVVGDLAQFIVSNKLSAQDVIDRAAELDFPGSVLEFLEGLMGQPFGGFPEPLRSRALRNRRKLDKRPGLYLEPLDLAAIKNQIREQFGSATEYDVASYAMYPKVFEDYKKFVQKYGDLSVLPTRYFLAKPEIGEEFHVELEKGKMLILKLLAIGPLSEQTGQREVFYEVNGEVRQVSIDDKKASIDNTARPKADVGDSSQVGAPMSGVVVEIRVHDGLEVKKGDPLAVLSAMKMEMVISAPHSGKVSGLLVKEGDSVDGQDLVCKITKA.

The region spanning 41–493 (QFQKILVANR…WTTFIDDTTE (453 aa)) is the Biotin carboxylation domain. ATP is bound by residues K159, E243, and H278. In terms of domain architecture, ATP-grasp spans 163–360 (RQLAIRCNVP…IVAAQIQIAA (198 aa)). The active site involves R335. In terms of domain architecture, Pyruvate carboxyltransferase spans 579–847 (CLIMDTTWRD…DPGLNSAHVR (269 aa)). Substrate contacts are provided by residues 587 to 591 (RDAHQ) and R660. D588 contributes to the a divalent metal cation binding site. K756, H786, and H788 together coordinate a divalent metal cation. At K756 the chain carries N6-carboxylysine. Position 921 (T921) interacts with substrate. The Biotinyl-binding domain occupies 1116–1191 (KADVGDSSQV…DGQDLVCKIT (76 aa)). K1157 is modified (N6-biotinyllysine).

The cofactor is biotin. Zn(2+) is required as a cofactor.

Its subcellular location is the cytoplasm. It carries out the reaction hydrogencarbonate + pyruvate + ATP = oxaloacetate + ADP + phosphate + H(+). Its pathway is carbohydrate biosynthesis; gluconeogenesis. Functionally, pyruvate carboxylase catalyzes a 2-step reaction, involving the ATP-dependent carboxylation of the covalently attached biotin in the first step and the transfer of the carboxyl group to pyruvate in the second. The polypeptide is Pyruvate carboxylase (pyc) (Aspergillus terreus (strain NIH 2624 / FGSC A1156)).